The chain runs to 618 residues: MSDVIRLLPDSIANQIAAGEVIQRPASVVKELLENALDAGASIIRLDVREAGRELIRVTDNGKGMSQSDARMAFERHATSKIASFQDLFSLRTMGFRGEALASIAAVAQVELLTRRAEDELGTRLTINGSEVGEVATVTSPQGCILCVKNLFYNVPARRKFLKSNETEFRHILTEYERVALVNPQVAFSIYHSGELVQDLPPSPLKKRILDVFGKRMEKDLIPIGIKSPITNISGFVGRPDGARKRGALQYFFVNGRFMRHPYFHKAVMAAYEAIIPQGTMPNYFLYFDLEPSQIDVNIHPTKTEIKFSDEQAIFKLIGVVIREALSSSNAVPAIDFDRKELIDIPAYQGPGKNVVRPPVDLDPSYNPFKETGLTEPIRSSRRQSPDMGWNELFKQFEAKRDAEKMAEPPIRSEGLFASTDFTPSAVSATPSTDMLCYVHRGRYLVTTLSRGLALVDFHRAHKRILYDRFMADESRRHIEQQQLLFPELLEFNPSDASAVKAAVDELQSVGFDLSPLGVSSYSLLAAPVQIIDCAADVVRDVIHTTLEDGRSSHEQMLELIATQIAEYQAIPCGKTPTAEEASDLLAELFASNDSTYTPDGKLIVSIIEEADIARRFE.

It belongs to the DNA mismatch repair MutL/HexB family.

Its function is as follows. This protein is involved in the repair of mismatches in DNA. It is required for dam-dependent methyl-directed DNA mismatch repair. May act as a 'molecular matchmaker', a protein that promotes the formation of a stable complex between two or more DNA-binding proteins in an ATP-dependent manner without itself being part of a final effector complex. This chain is DNA mismatch repair protein MutL, found in Porphyromonas gingivalis (strain ATCC 33277 / DSM 20709 / CIP 103683 / JCM 12257 / NCTC 11834 / 2561).